The primary structure comprises 288 residues: MKIPEEEFLAPGHRGCAGCGATVGVRLALKVLGKNTVAVSSTGCLEVITTPYPETAWRIPWIHVAFENAAAVASGVERALKAKGRDDVNVVAFAGDGGTADIGLQALSGAMERGHNIIYICYDNEAYMNTGIQRSASTPYGASTTTSPHGKESFGEDRPKKNMPLIMAAHGVPYVATASISYPEDFMEKVRKAKETDGPAYIHLHQPCTTGWGFDPAKTVELGRLAVETGSWILYEIEDGDFRVTYRPVQRKPVEEYLNAQKRFRHLTEEQKARIQEYVDSVCQELRI.

3 residues coordinate [4Fe-4S] cluster: Cys16, Cys19, and Cys44. Residues 137-148 (STPYGASTTTSP) show a composition bias toward polar residues. A disordered region spans residues 137-159 (STPYGASTTTSPHGKESFGEDRP). Residues 149 to 159 (HGKESFGEDRP) show a composition bias toward basic and acidic residues. Cys208 provides a ligand contact to [4Fe-4S] cluster.

In terms of assembly, heterotetramer of one alpha, one beta, one delta and one gamma chain. Requires [4Fe-4S] cluster as cofactor.

The enzyme catalyses 2 oxidized [2Fe-2S]-[ferredoxin] + pyruvate + CoA = 2 reduced [2Fe-2S]-[ferredoxin] + acetyl-CoA + CO2 + H(+). This chain is Pyruvate synthase subunit PorB (porB), found in Methanothermobacter thermautotrophicus (strain ATCC 29096 / DSM 1053 / JCM 10044 / NBRC 100330 / Delta H) (Methanobacterium thermoautotrophicum).